A 539-amino-acid chain; its full sequence is BTB/POZ domain-containing protein 6 (539 aa).

A signal peptide spans 1-23; sequence MLLPLACLHGRVAQCLTSLLVLA. The region spanning 137–207 is the BTB domain; it reads ADVHFIVGAL…MYSDEIDLEA (71 aa).

The protein resides in the cytoplasm. Functionally, adapter protein for the cul3 E3 ubiquitin-protein ligase complex. Involved in late neuronal development and muscle formation. The sequence is that of BTB/POZ domain-containing protein 6 (Btbd6) from Mus musculus (Mouse).